Consider the following 476-residue polypeptide: Replication factor C large subunit (476 aa).

Position 50 to 57 (50 to 57 (GPPGVGKT)) interacts with ATP. Positions 447 to 476 (YEKGTKKGKGEKRRKGSDEGSGLLKWLKKD) are disordered. Residues 452 to 461 (KKGKGEKRRK) are compositionally biased toward basic residues.

It belongs to the activator 1 small subunits family. RfcL subfamily. Heteromultimer composed of small subunits (RfcS) and large subunits (RfcL).

In terms of biological role, part of the RFC clamp loader complex which loads the PCNA sliding clamp onto DNA. In Ignicoccus hospitalis (strain KIN4/I / DSM 18386 / JCM 14125), this protein is Replication factor C large subunit.